A 216-amino-acid chain; its full sequence is Adenylate kinase (216 aa).

ATP is bound at residue 10-15 (GAGKGT). The interval 30 to 59 (STGDMLREAVKADTPLGIEAKKVMDVGGLI) is NMP. Residues threonine 31, arginine 36, 57–59 (GLI), 85–88 (GFPR), and glutamine 92 each bind AMP. The LID stretch occupies residues 122 to 159 (GRRAHLTSGRTYHIVYNPPKVEGIDDITGEELIQRTDD). Residues arginine 123 and 132–133 (TY) contribute to the ATP site. Positions 156 and 167 each coordinate AMP. ATP is bound at residue glycine 202.

It belongs to the adenylate kinase family. Monomer.

It is found in the cytoplasm. It carries out the reaction AMP + ATP = 2 ADP. It functions in the pathway purine metabolism; AMP biosynthesis via salvage pathway; AMP from ADP: step 1/1. In terms of biological role, catalyzes the reversible transfer of the terminal phosphate group between ATP and AMP. Plays an important role in cellular energy homeostasis and in adenine nucleotide metabolism. This Ruthia magnifica subsp. Calyptogena magnifica protein is Adenylate kinase.